Consider the following 469-residue polypeptide: RNA-editing ligase 1, mitochondrial (469 aa).

The N-terminal 44 residues, 1-44 (MQLQRLGAPLLKRLVGGCIRQSTAPIMPCVVVSGSGVFLTPVRT), are a transit peptide targeting the mitochondrion. ATP is bound by residues 59 to 61 (IEI), 86 to 92 (EKVHGTN), Arg111, Glu159, Phe209, and 307 to 309 (KLR). The active-site N6-AMP-lysine intermediate is the Lys87. Residues 450-469 (AAAQSEAIPPLSPAAPTKGE) are disordered.

The protein belongs to the RNA ligase 2 family. In terms of assembly, component of the RNA editing complex (editosome), a 1600 kDa complex composed of at least 20 proteins. Interacts with terminal uridylyltransferase MEAT1.

It is found in the mitochondrion. It catalyses the reaction ATP + (ribonucleotide)n-3'-hydroxyl + 5'-phospho-(ribonucleotide)m = (ribonucleotide)n+m + AMP + diphosphate.. Its function is as follows. Essential for RNA editing. RNA editing in kinetoplastid mitochondria inserts and deletes uridylates at multiple sites in pre-mRNAs as directed by guide RNAs. This Trypanosoma brucei brucei protein is RNA-editing ligase 1, mitochondrial (REL1).